A 568-amino-acid polypeptide reads, in one-letter code: Urease subunit alpha (568 aa).

Residues 130–568 (GGIDTHIHFI…LPMAQRYFLF (439 aa)) form the Urease domain. 3 residues coordinate Ni(2+): histidine 135, histidine 137, and lysine 218. Position 218 is an N6-carboxylysine (lysine 218). Histidine 220 provides a ligand contact to substrate. Histidine 247 and histidine 273 together coordinate Ni(2+). The Proton donor role is filled by histidine 321. Aspartate 361 contacts Ni(2+).

It belongs to the metallo-dependent hydrolases superfamily. Urease alpha subunit family. Heterotrimer of UreA (gamma), UreB (beta) and UreC (alpha) subunits. Three heterotrimers associate to form the active enzyme. Ni cation is required as a cofactor. In terms of processing, carboxylation allows a single lysine to coordinate two nickel ions.

Its subcellular location is the cytoplasm. The enzyme catalyses urea + 2 H2O + H(+) = hydrogencarbonate + 2 NH4(+). It functions in the pathway nitrogen metabolism; urea degradation; CO(2) and NH(3) from urea (urease route): step 1/1. The polypeptide is Urease subunit alpha (Burkholderia pseudomallei (strain 1106a)).